We begin with the raw amino-acid sequence, 79 residues long: Toxin ICK-20 (79 aa).

The signal sequence occupies residues 1 to 20 (MMKYFLVLCLVVLGVAAVQA). Disulfide bonds link C43-C57, C50-C61, C56-C78, and C68-C74. N-linked (GlcNAc...) asparagine glycosylation occurs at N71.

This sequence belongs to the neurotoxin 13 (insecticidal toxin ABC) family. ICK-21 subfamily. Expressed by the venom gland.

Its subcellular location is the secreted. Ion channel inhibitor. This chain is Toxin ICK-20, found in Trittame loki (Brush-footed trapdoor spider).